The sequence spans 1692 residues: Protein TOPAZ1 (1692 aa).

Disordered regions lie at residues 1-135, 600-629, and 894-919; these read MRRP…PGLD, ELSR…TGNK, and EPNV…EPSD. Positions 31 to 40 are enriched in gly residues; that stretch reads GAAGGCGPEA. A compositionally biased stretch (basic and acidic residues) spans 95 to 116; that stretch reads SDPRGLEAAKEAELPLQTERHT. Polar residues predominate over residues 608–627; that stretch reads VISNTTEDTQLTSETQSLTG. The segment covering 902–919 has biased composition (basic and acidic residues); that stretch reads QSTDSKYMETPVKKEPSD.

It localises to the cytoplasm. Its subcellular location is the cytosol. Its function is as follows. Important for normal spermatogenesis and male fertility. Specifically required for progression to the post-meiotic stages of spermatocyte development. Seems to be necessary for normal expression levels of a number of testis-expressed gene transcripts, although its role in this process is unclear. The chain is Protein TOPAZ1 (TOPAZ1) from Homo sapiens (Human).